Here is a 313-residue protein sequence, read N- to C-terminus: Jacalin-related lectin 8 (313 aa).

The signal sequence occupies residues 1-23 (MFIIYLFIFLSSAIIDSNGVAMA). Jacalin-type lectin domains are found at residues 24-163 (QKIE…YVKT) and 165-309 (PTKS…YFSP).

Belongs to the jacalin lectin family.

This is Jacalin-related lectin 8 (JAL8) from Arabidopsis thaliana (Mouse-ear cress).